The chain runs to 248 residues: Large ribosomal subunit protein uL30A (248 aa).

Residues 1 to 44 are disordered; it reads MSQKKQKIQVEQKVPENVAKKTQRDSKLRDAVAKRRTERLAANK. Residues 8–41 are compositionally biased toward basic and acidic residues; sequence IQVEQKVPENVAKKTQRDSKLRDAVAKRRTERLA.

The protein belongs to the universal ribosomal protein uL30 family.

In terms of biological role, binds to G-rich structures in 28S rRNA and in mRNAs. Plays a regulatory role in the translation apparatus; inhibits cell-free translation of mRNAs. The sequence is that of Large ribosomal subunit protein uL30A (Rpl7-1) from Paramecium tetraurelia.